Here is a 211-residue protein sequence, read N- to C-terminus: FMN-dependent NADH:quinone oxidoreductase 2 (211 aa).

Residue 102–105 (MWNF) coordinates FMN.

It belongs to the azoreductase type 1 family. Homodimer. Requires FMN as cofactor.

The enzyme catalyses 2 a quinone + NADH + H(+) = 2 a 1,4-benzosemiquinone + NAD(+). The catalysed reaction is N,N-dimethyl-1,4-phenylenediamine + anthranilate + 2 NAD(+) = 2-(4-dimethylaminophenyl)diazenylbenzoate + 2 NADH + 2 H(+). Its function is as follows. Quinone reductase that provides resistance to thiol-specific stress caused by electrophilic quinones. Also exhibits azoreductase activity. Catalyzes the reductive cleavage of the azo bond in aromatic azo compounds to the corresponding amines. The chain is FMN-dependent NADH:quinone oxidoreductase 2 from Bacillus thuringiensis subsp. konkukian (strain 97-27).